The sequence spans 313 residues: Porphobilinogen deaminase (313 aa).

S-(dipyrrolylmethanemethyl)cysteine is present on Cys-242.

This sequence belongs to the HMBS family. In terms of assembly, monomer. Dipyrromethane is required as a cofactor.

The enzyme catalyses 4 porphobilinogen + H2O = hydroxymethylbilane + 4 NH4(+). Its pathway is porphyrin-containing compound metabolism; protoporphyrin-IX biosynthesis; coproporphyrinogen-III from 5-aminolevulinate: step 2/4. In terms of biological role, tetrapolymerization of the monopyrrole PBG into the hydroxymethylbilane pre-uroporphyrinogen in several discrete steps. This chain is Porphobilinogen deaminase, found in Klebsiella pneumoniae subsp. pneumoniae (strain ATCC 700721 / MGH 78578).